Reading from the N-terminus, the 86-residue chain is Translation machinery-associated protein 10 (86 aa).

2 positions are modified to phosphoserine: Ser28 and Ser79. A disordered region spans residues Asn63–Ile86.

Belongs to the STF2 family. As to quaternary structure, associates with ribosomes.

Its subcellular location is the cytoplasm. It localises to the nucleus. In terms of biological role, may be involved in inhibition of the reverse ATPase reaction of mitochondrial F(1)F(0)-type ATP synthase. The protein is Translation machinery-associated protein 10 of Saccharomyces cerevisiae (strain ATCC 204508 / S288c) (Baker's yeast).